The chain runs to 176 residues: Large ribosomal subunit protein uL16 (176 aa).

This sequence belongs to the universal ribosomal protein uL16 family.

This is Large ribosomal subunit protein uL16 from Halobacterium salinarum (strain ATCC 29341 / DSM 671 / R1).